A 188-amino-acid chain; its full sequence is NAD(P)H-quinone oxidoreductase subunit J (188 aa).

Belongs to the complex I 30 kDa subunit family. NDH-1 can be composed of about 15 different subunits; different subcomplexes with different compositions have been identified which probably have different functions.

The protein localises to the cellular thylakoid membrane. The enzyme catalyses a plastoquinone + NADH + (n+1) H(+)(in) = a plastoquinol + NAD(+) + n H(+)(out). It catalyses the reaction a plastoquinone + NADPH + (n+1) H(+)(in) = a plastoquinol + NADP(+) + n H(+)(out). In terms of biological role, NDH-1 shuttles electrons from an unknown electron donor, via FMN and iron-sulfur (Fe-S) centers, to quinones in the respiratory and/or the photosynthetic chain. The immediate electron acceptor for the enzyme in this species is believed to be plastoquinone. Couples the redox reaction to proton translocation, and thus conserves the redox energy in a proton gradient. Cyanobacterial NDH-1 also plays a role in inorganic carbon-concentration. The protein is NAD(P)H-quinone oxidoreductase subunit J of Parasynechococcus marenigrum (strain WH8102).